The chain runs to 424 residues: 3-phosphoshikimate 1-carboxyvinyltransferase (424 aa).

Residues lysine 21, serine 22, and arginine 26 each coordinate 3-phosphoshikimate. Lysine 21 contacts phosphoenolpyruvate. The phosphoenolpyruvate site is built by glycine 91 and arginine 119. 3-phosphoshikimate-binding residues include serine 164, glutamine 166, aspartate 310, and lysine 337. Glutamine 166 contributes to the phosphoenolpyruvate binding site. Residue aspartate 310 is the Proton acceptor of the active site. Phosphoenolpyruvate is bound by residues arginine 341 and arginine 382.

It belongs to the EPSP synthase family. Monomer.

It localises to the cytoplasm. It catalyses the reaction 3-phosphoshikimate + phosphoenolpyruvate = 5-O-(1-carboxyvinyl)-3-phosphoshikimate + phosphate. It participates in metabolic intermediate biosynthesis; chorismate biosynthesis; chorismate from D-erythrose 4-phosphate and phosphoenolpyruvate: step 6/7. Catalyzes the transfer of the enolpyruvyl moiety of phosphoenolpyruvate (PEP) to the 5-hydroxyl of shikimate-3-phosphate (S3P) to produce enolpyruvyl shikimate-3-phosphate and inorganic phosphate. This Campylobacter hominis (strain ATCC BAA-381 / DSM 21671 / CCUG 45161 / LMG 19568 / NCTC 13146 / CH001A) protein is 3-phosphoshikimate 1-carboxyvinyltransferase.